The sequence spans 344 residues: tRNA N6-adenosine threonylcarbamoyltransferase (344 aa).

Fe cation contacts are provided by His115 and His119. Substrate contacts are provided by residues 137-141 (LVSGG), Asp170, Gly183, Asp187, and Asn276. Asp306 contributes to the Fe cation binding site.

Belongs to the KAE1 / TsaD family. It depends on Fe(2+) as a cofactor.

The protein resides in the cytoplasm. The enzyme catalyses L-threonylcarbamoyladenylate + adenosine(37) in tRNA = N(6)-L-threonylcarbamoyladenosine(37) in tRNA + AMP + H(+). Functionally, required for the formation of a threonylcarbamoyl group on adenosine at position 37 (t(6)A37) in tRNAs that read codons beginning with adenine. Is involved in the transfer of the threonylcarbamoyl moiety of threonylcarbamoyl-AMP (TC-AMP) to the N6 group of A37, together with TsaE and TsaB. TsaD likely plays a direct catalytic role in this reaction. The polypeptide is tRNA N6-adenosine threonylcarbamoyltransferase (Limosilactobacillus fermentum (strain NBRC 3956 / LMG 18251) (Lactobacillus fermentum)).